Reading from the N-terminus, the 705-residue chain is Polyribonucleotide nucleotidyltransferase (705 aa).

Mg(2+) is bound by residues Asp-487 and Asp-493. A KH domain is found at 554-613 (PKILTMTINPDKIRDVIGPSGKQINKIIEETGVKIDIEQDGTIFISSTDESGNQKAKKII). In terms of domain architecture, S1 motif spans 623-691 (GQLYLGKVKR…KQGRVNLSRK (69 aa)).

This sequence belongs to the polyribonucleotide nucleotidyltransferase family. In terms of assembly, homodimer. Component of a possible RNA degradosome complex composed of rny, rnjA, rnjB, pnp, pfkA and eno (although rnjA and rnjB's presence is unclear). RNA helicase CshA may also be a member of this complex. Mg(2+) is required as a cofactor.

The protein resides in the cytoplasm. It carries out the reaction RNA(n+1) + phosphate = RNA(n) + a ribonucleoside 5'-diphosphate. In terms of biological role, involved in mRNA degradation. Catalyzes the phosphorolysis of single-stranded polyribonucleotides processively in the 3'- to 5'-direction. Necessary for competence development in Bacillus subtilis. May be necessary for modification of the srfA transcript (stabilization or translation activation). Involved in processing precursor type I toxin-antitoxin RNAs antitoxin SR4 and SR5 RNAs to their mature forms. The sequence is that of Polyribonucleotide nucleotidyltransferase from Bacillus subtilis (strain 168).